Consider the following 511-residue polypeptide: Histidine ammonia-lyase (511 aa).

The segment at residues 142–144 (ASG) is a cross-link (5-imidazolinone (Ala-Gly)). S143 bears the 2,3-didehydroalanine (Ser) mark.

Belongs to the PAL/histidase family. Contains an active site 4-methylidene-imidazol-5-one (MIO), which is formed autocatalytically by cyclization and dehydration of residues Ala-Ser-Gly.

The protein localises to the cytoplasm. The catalysed reaction is L-histidine = trans-urocanate + NH4(+). It functions in the pathway amino-acid degradation; L-histidine degradation into L-glutamate; N-formimidoyl-L-glutamate from L-histidine: step 1/3. This chain is Histidine ammonia-lyase (hutH), found in Rhizobium meliloti (strain 1021) (Ensifer meliloti).